A 212-amino-acid polypeptide reads, in one-letter code: N-acetyltransferase 9-like protein (212 aa).

The N-acetyltransferase domain maps to 34 to 201 (EEIREQTASE…INLLNLKNND (168 aa)).

It belongs to the acetyltransferase family. GNAT subfamily.

The sequence is that of N-acetyltransferase 9-like protein (nat9) from Dictyostelium discoideum (Social amoeba).